Reading from the N-terminus, the 561-residue chain is Glucose-6-phosphate isomerase (561 aa).

Residues 171-172, 222-227, Q366, E370, H401, and K525 each bind D-glucose 6-phosphate; these read GS and SKTFTT. Residue E370 is the Proton donor of the active site. Catalysis depends on residues H401 and K525.

Belongs to the GPI family. Homodimer.

The protein localises to the cytoplasm. It localises to the cytosol. The enzyme catalyses alpha-D-glucose 6-phosphate = beta-D-fructose 6-phosphate. The protein operates within carbohydrate degradation; glycolysis; D-glyceraldehyde 3-phosphate and glycerone phosphate from D-glucose: step 2/4. In the cytoplasm, catalyzes the conversion of glucose-6-phosphate to fructose-6-phosphate, the second step in glycolysis, and the reverse reaction during gluconeogenesis. The protein is Glucose-6-phosphate isomerase (pgi-1) of Neurospora crassa (strain ATCC 24698 / 74-OR23-1A / CBS 708.71 / DSM 1257 / FGSC 987).